The primary structure comprises 267 residues: MRVREPAVAGTFYPKDKEELNKLMDLLCGFEPKEKIKPKAILVPHAGYIYSGKTACEVYKRIEIPEKVVLLGPNHTGLGKPISVYSGDAWETPYGVVEIDGELREKILKYPYANPDEYAHLYEHSLEVQLPFLQRYARREFKILPIVVTFVEYEVAKDFGRFLGEVLKEEDALIVISSDMSHYVPAEEARKKDEILISAMERLNTEELYFKAVQYNITMCGVVPAVVGIESAKVLGATKGIVVDYSNSGDTTGDYSQVVAYLGMIFL.

Belongs to the MEMO1 family.

The chain is MEMO1 family protein aq_890 from Aquifex aeolicus (strain VF5).